The sequence spans 229 residues: 5'-methylthioadenosine/S-adenosylhomocysteine nucleosidase (229 aa).

The active-site Proton acceptor is glutamate 12. Substrate contacts are provided by residues glycine 78, isoleucine 152, and 173–174; that span reads ME. Aspartate 197 (proton donor) is an active-site residue.

The protein belongs to the PNP/UDP phosphorylase family. MtnN subfamily.

It carries out the reaction S-adenosyl-L-homocysteine + H2O = S-(5-deoxy-D-ribos-5-yl)-L-homocysteine + adenine. It catalyses the reaction S-methyl-5'-thioadenosine + H2O = 5-(methylsulfanyl)-D-ribose + adenine. The enzyme catalyses 5'-deoxyadenosine + H2O = 5-deoxy-D-ribose + adenine. Its pathway is amino-acid biosynthesis; L-methionine biosynthesis via salvage pathway; S-methyl-5-thio-alpha-D-ribose 1-phosphate from S-methyl-5'-thioadenosine (hydrolase route): step 1/2. Functionally, catalyzes the irreversible cleavage of the glycosidic bond in both 5'-methylthioadenosine (MTA) and S-adenosylhomocysteine (SAH/AdoHcy) to adenine and the corresponding thioribose, 5'-methylthioribose and S-ribosylhomocysteine, respectively. Also cleaves 5'-deoxyadenosine, a toxic by-product of radical S-adenosylmethionine (SAM) enzymes, into 5-deoxyribose and adenine. The chain is 5'-methylthioadenosine/S-adenosylhomocysteine nucleosidase from Histophilus somni (strain 2336) (Haemophilus somnus).